Here is a 423-residue protein sequence, read N- to C-terminus: UDP-N-acetylmuramoylalanine--D-glutamate ligase (423 aa).

112–118 (GSVGKST) is a binding site for ATP.

The protein belongs to the MurCDEF family.

It localises to the cytoplasm. It catalyses the reaction UDP-N-acetyl-alpha-D-muramoyl-L-alanine + D-glutamate + ATP = UDP-N-acetyl-alpha-D-muramoyl-L-alanyl-D-glutamate + ADP + phosphate + H(+). The protein operates within cell wall biogenesis; peptidoglycan biosynthesis. Cell wall formation. Catalyzes the addition of glutamate to the nucleotide precursor UDP-N-acetylmuramoyl-L-alanine (UMA). The chain is UDP-N-acetylmuramoylalanine--D-glutamate ligase from Thermosipho africanus (strain TCF52B).